Consider the following 367-residue polypeptide: Probable butyrate kinase (367 aa).

This sequence belongs to the acetokinase family.

It localises to the cytoplasm. It carries out the reaction butanoate + ATP = butanoyl phosphate + ADP. The chain is Probable butyrate kinase from Bacillus cereus (strain ATCC 14579 / DSM 31 / CCUG 7414 / JCM 2152 / NBRC 15305 / NCIMB 9373 / NCTC 2599 / NRRL B-3711).